Here is a 115-residue protein sequence, read N- to C-terminus: Fluoride-specific ion channel FluC 4 (115 aa).

2 helical membrane passes run 19 to 39 (WGTF…AGLG) and 42 to 62 (LGGI…LLGG). Residues G61 and T64 each contribute to the Na(+) site. A helical membrane pass occupies residues 89–109 (IVASALLCVLAVAAGYGGIMW).

Belongs to the fluoride channel Fluc/FEX (TC 1.A.43) family.

It localises to the cell inner membrane. It catalyses the reaction fluoride(in) = fluoride(out). Na(+) is not transported, but it plays an essential structural role and its presence is essential for fluoride channel function. Functionally, fluoride-specific ion channel. Important for reducing fluoride concentration in the cell, thus reducing its toxicity. This Brucella melitensis biotype 1 (strain ATCC 23456 / CCUG 17765 / NCTC 10094 / 16M) protein is Fluoride-specific ion channel FluC 4.